A 121-amino-acid chain; its full sequence is Small ribosomal subunit protein bS6 (121 aa).

The tract at residues 99–121 (PLPAPRVAPGTEAPAEPEAAAPA) is disordered. The span at 110–121 (EAPAEPEAAAPA) shows a compositional bias: low complexity.

This sequence belongs to the bacterial ribosomal protein bS6 family.

In terms of biological role, binds together with bS18 to 16S ribosomal RNA. This chain is Small ribosomal subunit protein bS6, found in Synechococcus sp. (strain CC9311).